Consider the following 604-residue polypeptide: MEAIMLQKNKRNFSIIAHIDHGKSTIADRLLEYTGTVSERDMKEQILDSMDLEREKGITIKAQAVTLFYKAKNGEEYELNLIDTPGHVDFIYEVSRSLAACEGALLVVDAAQGVEAQTLANVYLAIENNLEILPIINKIDLPAAEPEKVKREIEDIIGLPADDAVLASAKNGIGIEDILEAIVHRIPAPNYDEDAPLKALIFDSYFDDYRGVITYVKVLDGNIKKGDKIKIWSTEKELEVLEAGIFSPTMKSTDILSTGSVGYIITGVKTIHDTRVGDTITSVKNPALFPLAGFKPAQSMVFAGVYPLFTDDYEELREALEKLQLNDASLTFVPETSIALGFGFRCGFLGLLHMEIIVERLRREYNIDLISTTPSVEYKVSIDNQEEKVIDNPCEFPDPGRGKITIQEPYIRGKVIVPKEYVGNVMELCQEKRGIFISMDYLDETRSMLSYELPLAEIVIDFYDKLKSRTKGYASFEYELSEYKISNLVKVDILVSGKPVDAFSFIAHNDNAFHRGKAICQKLSEVIPRQQFEIPIQAALGSKIIARETIKAYRKNVIAKCYGGDITRKKKLLEKQKEGKKRMKSIGNVEIPQEAFVSVLKLND.

Residues 8–190 (KNKRNFSIIA…AIVHRIPAPN (183 aa)) form the tr-type G domain. Residues 20–25 (DHGKST) and 137–140 (NKID) each bind GTP.

Belongs to the TRAFAC class translation factor GTPase superfamily. Classic translation factor GTPase family. LepA subfamily.

It is found in the cell inner membrane. The enzyme catalyses GTP + H2O = GDP + phosphate + H(+). In terms of biological role, required for accurate and efficient protein synthesis under certain stress conditions. May act as a fidelity factor of the translation reaction, by catalyzing a one-codon backward translocation of tRNAs on improperly translocated ribosomes. Back-translocation proceeds from a post-translocation (POST) complex to a pre-translocation (PRE) complex, thus giving elongation factor G a second chance to translocate the tRNAs correctly. Binds to ribosomes in a GTP-dependent manner. This chain is Elongation factor 4, found in Fusobacterium nucleatum subsp. nucleatum (strain ATCC 25586 / DSM 15643 / BCRC 10681 / CIP 101130 / JCM 8532 / KCTC 2640 / LMG 13131 / VPI 4355).